The following is an 82-amino-acid chain: Cytochrome b559 subunit alpha (82 aa).

The helical transmembrane segment at 22–36 threads the bilayer; sequence VIHAVTLPSIFLAGF. His-24 is a binding site for heme.

The protein belongs to the PsbE/PsbF family. In terms of assembly, heterodimer of an alpha subunit and a beta subunit. PSII is composed of 1 copy each of membrane proteins PsbA, PsbB, PsbC, PsbD, PsbE, PsbF, PsbH, PsbI, PsbJ, PsbK, PsbL, PsbM, PsbT, PsbX, PsbY, PsbZ, Psb30/Ycf12, peripheral proteins PsbO, CyanoQ (PsbQ), PsbU, PsbV and a large number of cofactors. It forms dimeric complexes. Heme b is required as a cofactor.

It localises to the cellular thylakoid membrane. In terms of biological role, this b-type cytochrome is tightly associated with the reaction center of photosystem II (PSII). PSII is a light-driven water:plastoquinone oxidoreductase that uses light energy to abstract electrons from H(2)O, generating O(2) and a proton gradient subsequently used for ATP formation. It consists of a core antenna complex that captures photons, and an electron transfer chain that converts photonic excitation into a charge separation. The protein is Cytochrome b559 subunit alpha of Synechococcus sp. (strain CC9605).